Reading from the N-terminus, the 517-residue chain is Transmembrane protein 180 (517 aa).

Over 1-11 (MRLGGPWAWLL) the chain is Extracellular. The chain crosses the membrane as a helical span at residues 12–43 (GLPTAVVYGSLALFVSVLHNVFLLYYVDTFVS). The Cytoplasmic segment spans residues 44-55 (VYKIDKAAFWVG). The helical transmembrane segment at 56–74 (ETVFLLWNSLNDPLFGWLS) threads the bilayer. The Extracellular portion of the chain corresponds to 75 to 100 (DRQFLSSQPRSGAGLSSRAVVLARVR). The helical transmembrane segment at 101-118 (ALGWHGPLLALSFLAFWV) threads the bilayer. Over 119 to 126 (PWAPAGLQ) the chain is Cytoplasmic. A helical transmembrane segment spans residues 127–151 (FLLCLCLYDGFLTLVDLHHHALLAD). Residues 152–155 (LALS) lie on the Extracellular side of the membrane. A helical transmembrane segment spans residues 156-179 (AHDRTHLNFYCSLFSAAGSLSVFA). Over 180 to 191 (SYAFWNKEDFSS) the chain is Cytoplasmic. A helical transmembrane segment spans residues 192–223 (FRAFCLALATGSGLGFVGAARLLRRRVEAAGR). Over 224–264 (EPGCPAMAVNDGLCEEELLVGGEEAGSITLGQYLQQLARHR) the chain is Extracellular. A helical transmembrane segment spans residues 265–292 (NFLWFVGMDLVQVFHCHFNSNFFPLFLE). Over 293–305 (HLLSDHISLSTGS) the chain is Cytoplasmic. The chain crosses the membrane as a helical span at residues 306 to 325 (FLLGISYVAPHLNNLYFLPL). The Extracellular segment spans residues 326-330 (CRRWG). A helical transmembrane segment spans residues 331–350 (VYAVVRGLFLLKLGLSLLML). The Cytoplasmic portion of the chain corresponds to 351-358 (LAGPDHPG). The chain crosses the membrane as a helical span at residues 359-393 (LLCLFIASNRVFTEGTCKLLTLVVTDLVDEDLVLN). At 394 to 402 (HRKQAASAL) the chain is on the extracellular side. The helical transmembrane segment at 403 to 429 (LFGMVALVTKPGQTFAPLLGTWLLCFY) threads the bilayer. The Cytoplasmic portion of the chain corresponds to 430–466 (TGHDLFQQHPPAPVGSAQPWPEPPAPPPAQAPPLRQG). A helical membrane pass occupies residues 467–485 (CFYLLVLVPIACALLQLFT). Residues 486–517 (WSQFTLHGRRLHMVKAQRQSLSRAQTLDVKMV) are Extracellular-facing.

It localises to the cell membrane. In Bos taurus (Bovine), this protein is Transmembrane protein 180.